Consider the following 265-residue polypeptide: AT-hook motif nuclear-localized protein 18 (265 aa).

The disordered stretch occupies residues 1-75 (MDEVSRSHTP…AGSKNKPKAP (75 aa)). Basic residues predominate over residues 19 to 30 (HYHHQNAGRQKR). The a.T hook DNA-binding region spans 59–71 (RRPRGRPAGSKNK). A PPC domain is found at 83-217 (ANAFRCHVME…EEEETEREID (135 aa)).

It localises to the nucleus. Functionally, transcription factor that specifically binds AT-rich DNA sequences related to the nuclear matrix attachment regions (MARs). Acts redundantly with AHL22, AHL27 and AHL29 in the regulation of flowering and regulation of the hypocotyl elongation. This Arabidopsis thaliana (Mouse-ear cress) protein is AT-hook motif nuclear-localized protein 18.